The primary structure comprises 305 residues: Small ribosomal subunit protein uS3 (305 aa).

The region spanning 17 to 86 (IDEFFSEELS…DPQVDVQEVD (70 aa)) is the KH type-2 domain. 2 stretches are compositionally biased toward acidic residues: residues 207–262 (EPEG…EAET) and 272–305 (AAEEPDEALDEDVEAEAEELLDEMEDETTDEEET). The tract at residues 207 to 305 (EPEGDVEELL…EDETTDEEET (99 aa)) is disordered.

It belongs to the universal ribosomal protein uS3 family. As to quaternary structure, part of the 30S ribosomal subunit.

Its function is as follows. Binds the lower part of the 30S subunit head. This is Small ribosomal subunit protein uS3 from Natronomonas pharaonis (strain ATCC 35678 / DSM 2160 / CIP 103997 / JCM 8858 / NBRC 14720 / NCIMB 2260 / Gabara) (Halobacterium pharaonis).